The primary structure comprises 513 residues: Probable histone deacetylase 19 (513 aa).

Residues 23–334 are histone deacetylase; sequence RRVCYFYDPD…WCYETGVALG (312 aa). His-154 (proton donor/acceptor) is an active-site residue. Zn(2+)-binding residues include Asp-189, His-191, and Asp-277. Disordered stretches follow at residues 384–432 and 446–513; these read HAPS…ESSR and ENAT…YHKP. Residues 398 to 409 are compositionally biased toward acidic residues; that stretch reads EIPEQDEDQDDP. The segment covering 410–432 has biased composition (basic and acidic residues); the sequence is DERHDPDSDMEVDDHKAVEESSR. The segment covering 492–504 has biased composition (polar residues); the sequence is NVKNEPESSTKLQ.

Belongs to the histone deacetylase family. HD type 1 subfamily. Zn(2+) serves as cofactor.

The protein localises to the nucleus. It carries out the reaction N(6)-acetyl-L-lysyl-[histone] + H2O = L-lysyl-[histone] + acetate. Its function is as follows. Responsible for the deacetylation of lysine residues on the N-terminal part of the core histones (H2A, H2B, H3 and H4). Histone deacetylation gives a tag for epigenetic repression and plays an important role in transcriptional regulation, cell cycle progression and developmental events. Histone deacetylases act via the formation of large multiprotein complexes. This is Probable histone deacetylase 19 from Zea mays (Maize).